The chain runs to 397 residues: LL-diaminopimelate aminotransferase (397 aa).

Substrate is bound by residues Tyr14 and Gly41. Residues Tyr71, 104–105 (AK), Tyr128, Asn174, Tyr205, and 233–235 (SFS) each bind pyridoxal 5'-phosphate. Substrate contacts are provided by Lys105, Tyr128, and Asn174. Lys236 carries the N6-(pyridoxal phosphate)lysine modification. 2 residues coordinate pyridoxal 5'-phosphate: Arg244 and Asn275. 2 residues coordinate substrate: Asn275 and Arg368.

The protein belongs to the class-I pyridoxal-phosphate-dependent aminotransferase family. LL-diaminopimelate aminotransferase subfamily. As to quaternary structure, homodimer. It depends on pyridoxal 5'-phosphate as a cofactor.

It catalyses the reaction (2S,6S)-2,6-diaminopimelate + 2-oxoglutarate = (S)-2,3,4,5-tetrahydrodipicolinate + L-glutamate + H2O + H(+). Its pathway is amino-acid biosynthesis; L-lysine biosynthesis via DAP pathway; LL-2,6-diaminopimelate from (S)-tetrahydrodipicolinate (aminotransferase route): step 1/1. Its function is as follows. Involved in the synthesis of meso-diaminopimelate (m-DAP or DL-DAP), required for both lysine and peptidoglycan biosynthesis. Catalyzes the direct conversion of tetrahydrodipicolinate to LL-diaminopimelate. This is LL-diaminopimelate aminotransferase from Chlamydia pneumoniae (Chlamydophila pneumoniae).